The sequence spans 418 residues: Queuine tRNA-ribosyltransferase accessory subunit 2 (418 aa).

Zn(2+)-binding residues include Cys325, Cys327, Cys330, and His356.

The protein belongs to the queuine tRNA-ribosyltransferase family. QTRT2 subfamily. In terms of assembly, heterodimer of a catalytic subunit and an accessory subunit. Requires Zn(2+) as cofactor.

It is found in the cytoplasm. In terms of biological role, non-catalytic subunit of the queuine tRNA-ribosyltransferase (TGT) that catalyzes the base-exchange of a guanine (G) residue with queuine (Q) at position 34 (anticodon wobble position) in tRNAs with GU(N) anticodons (tRNA-Asp, -Asn, -His and -Tyr), resulting in the hypermodified nucleoside queuosine (7-(((4,5-cis-dihydroxy-2-cyclopenten-1-yl)amino)methyl)-7-deazaguanosine). This Drosophila sechellia (Fruit fly) protein is Queuine tRNA-ribosyltransferase accessory subunit 2.